The following is an 845-amino-acid chain: Protein SEY1 (845 aa).

Positions 1 to 29 form a coiled coil; that stretch reads MELNVDSAKQLLAEHEQELQSAHDAHSIL. The Cytoplasmic portion of the chain corresponds to 1–749; that stretch reads MELNVDSAKQ…KRATVSSIAQ (749 aa). Residues 112–334 enclose the GB1/RHD3-type G domain; that stretch reads GFGYDLCAVL…DPNFVFKTEY (223 aa). Residue 122-129 participates in GTP binding; sequence GSQSTGKS. Residues 750 to 770 traverse the membrane as a helical segment; it reads VPLWMYGVMLVLGWNELMAIL. The Lumenal segment spans residues 771–773; that stretch reads SSP. The chain crosses the membrane as a helical span at residues 774 to 794; it reads VYFAFLLVLIASAYIVWRLNL. The Cytoplasmic portion of the chain corresponds to 795-845; the sequence is SGPLISVLRAVANEVHRLADAQLRTHFSQPLREPRPPAESRPAEQIELEPN. Residues 823–845 form a disordered region; the sequence is QPLREPRPPAESRPAEQIELEPN. Residues 826–838 are compositionally biased toward basic and acidic residues; it reads REPRPPAESRPAE.

This sequence belongs to the TRAFAC class dynamin-like GTPase superfamily. GB1/RHD3 GTPase family. RHD3 subfamily.

Its subcellular location is the endoplasmic reticulum membrane. In terms of biological role, cooperates with the reticulon proteins and tubule-shaping DP1 family proteins to generate and maintain the structure of the tubular endoplasmic reticulum network. Has GTPase activity, which is required for its function in ER organization. The protein is Protein SEY1 of Mycosarcoma maydis (Corn smut fungus).